Consider the following 577-residue polypeptide: Sulfite reductase [NADPH] hemoprotein beta-component (577 aa).

[4Fe-4S] cluster contacts are provided by C440, C446, C486, and C490. C490 is a binding site for siroheme.

Belongs to the nitrite and sulfite reductase 4Fe-4S domain family. As to quaternary structure, alpha(8)-beta(8). The alpha component is a flavoprotein, the beta component is a hemoprotein. Requires siroheme as cofactor. [4Fe-4S] cluster is required as a cofactor.

It carries out the reaction hydrogen sulfide + 3 NADP(+) + 3 H2O = sulfite + 3 NADPH + 4 H(+). It functions in the pathway sulfur metabolism; hydrogen sulfide biosynthesis; hydrogen sulfide from sulfite (NADPH route): step 1/1. Functionally, component of the sulfite reductase complex that catalyzes the 6-electron reduction of sulfite to sulfide. This is one of several activities required for the biosynthesis of L-cysteine from sulfate. The protein is Sulfite reductase [NADPH] hemoprotein beta-component of Vibrio cholerae serotype O1 (strain ATCC 39541 / Classical Ogawa 395 / O395).